The chain runs to 242 residues: Phosphoribosylaminoimidazole-succinocarboxamide synthase (242 aa).

It belongs to the SAICAR synthetase family.

The catalysed reaction is 5-amino-1-(5-phospho-D-ribosyl)imidazole-4-carboxylate + L-aspartate + ATP = (2S)-2-[5-amino-1-(5-phospho-beta-D-ribosyl)imidazole-4-carboxamido]succinate + ADP + phosphate + 2 H(+). The protein operates within purine metabolism; IMP biosynthesis via de novo pathway; 5-amino-1-(5-phospho-D-ribosyl)imidazole-4-carboxamide from 5-amino-1-(5-phospho-D-ribosyl)imidazole-4-carboxylate: step 1/2. This is Phosphoribosylaminoimidazole-succinocarboxamide synthase from Pediococcus pentosaceus (strain ATCC 25745 / CCUG 21536 / LMG 10740 / 183-1w).